Consider the following 718-residue polypeptide: Pullulanase (718 aa).

Catalysis depends on Asp406, which acts as the Nucleophile. The Proton donor role is filled by Glu435.

The protein belongs to the glycosyl hydrolase 13 family.

It catalyses the reaction Hydrolysis of (1-&gt;6)-alpha-D-glucosidic linkages in pullulan, amylopectin and glycogen, and in the alpha- and beta-limit dextrins of amylopectin and glycogen.. The protein is Pullulanase (amyX) of Bacillus subtilis (strain 168).